The following is a 312-amino-acid chain: Ribosomal RNA small subunit methyltransferase H (312 aa).

S-adenosyl-L-methionine is bound by residues 33-35 (GGH), Asp-53, Phe-80, Asp-102, and Gln-109.

This sequence belongs to the methyltransferase superfamily. RsmH family.

It is found in the cytoplasm. The enzyme catalyses cytidine(1402) in 16S rRNA + S-adenosyl-L-methionine = N(4)-methylcytidine(1402) in 16S rRNA + S-adenosyl-L-homocysteine + H(+). In terms of biological role, specifically methylates the N4 position of cytidine in position 1402 (C1402) of 16S rRNA. The protein is Ribosomal RNA small subunit methyltransferase H of Heliobacterium mobile (Heliobacillus mobilis).